Consider the following 510-residue polypeptide: ATP synthase subunit alpha (510 aa).

An ATP-binding site is contributed by 169 to 176 (GDRQTGKT).

Belongs to the ATPase alpha/beta chains family. As to quaternary structure, F-type ATPases have 2 components, CF(1) - the catalytic core - and CF(0) - the membrane proton channel. CF(1) has five subunits: alpha(3), beta(3), gamma(1), delta(1), epsilon(1). CF(0) has three main subunits: a(1), b(2) and c(9-12). The alpha and beta chains form an alternating ring which encloses part of the gamma chain. CF(1) is attached to CF(0) by a central stalk formed by the gamma and epsilon chains, while a peripheral stalk is formed by the delta and b chains.

Its subcellular location is the cell inner membrane. The enzyme catalyses ATP + H2O + 4 H(+)(in) = ADP + phosphate + 5 H(+)(out). In terms of biological role, produces ATP from ADP in the presence of a proton gradient across the membrane. The alpha chain is a regulatory subunit. The sequence is that of ATP synthase subunit alpha from Anaeromyxobacter dehalogenans (strain 2CP-1 / ATCC BAA-258).